Here is a 201-residue protein sequence, read N- to C-terminus: Snake venom metalloproteinase trimerelysin-2 (201 aa).

Glutamine 1 carries the pyrrolidone carboxylic acid modification. The Peptidase M12B domain occupies 6-201 (RYIELAIVVD…YNPQCILNAP (196 aa)). An N-linked (GlcNAc...) asparagine glycan is attached at asparagine 72. 3 cysteine pairs are disulfide-bonded: cysteine 117-cysteine 196, cysteine 158-cysteine 180, and cysteine 160-cysteine 163. Histidine 142 provides a ligand contact to Zn(2+). Glutamate 143 is an active-site residue. Zn(2+)-binding residues include histidine 146 and histidine 152.

It belongs to the venom metalloproteinase (M12B) family. P-I subfamily. As to quaternary structure, monomer. Zn(2+) serves as cofactor. As to expression, expressed by the venom gland.

Its subcellular location is the secreted. It carries out the reaction Cleavage of 3-Asn-|-Gln-4, 10-His-|-Leu-11 and 14-Ala-|-Leu-15 in the insulin B chain, and the bond Z-Gly-Pro-|-Leu-Gly-Pro in a small molecule substrate of microbial collagenase.. Its function is as follows. Major venom non-hemorrhagic metalloproteinase. The polypeptide is Snake venom metalloproteinase trimerelysin-2 (Protobothrops flavoviridis (Habu)).